We begin with the raw amino-acid sequence, 245 residues long: Endo-chitosanase (245 aa).

A signal peptide spans 1–17; that stretch reads MHFAGIVAIALATGATA.

The protein belongs to the glycosyl hydrolase 75 family.

It localises to the secreted. It catalyses the reaction Endohydrolysis of beta-(1-&gt;4)-linkages between D-glucosamine residues in a partly acetylated chitosan.. Chitosanase catalyzing the endo-type cleavage of chitosan, the deacylated form of chitin. Chitosanase may be crucial in the degradation of the deacetylated portion of chitin in the fungal cell wall. Chitoolisaccharides produced by the hydrolysis of partially N-acetylated chitosan are known to have many biological activities, including antibacterial activity, immune-enhancing effects, and elicitor activity. This chain is Endo-chitosanase (csn), found in Aspergillus oryzae (strain ATCC 42149 / RIB 40) (Yellow koji mold).